Reading from the N-terminus, the 200-residue chain is NADH-quinone oxidoreductase subunit C (200 aa).

The protein belongs to the complex I 30 kDa subunit family. NDH-1 is composed of 14 different subunits. Subunits NuoB, C, D, E, F, and G constitute the peripheral sector of the complex.

The protein resides in the cell inner membrane. It catalyses the reaction a quinone + NADH + 5 H(+)(in) = a quinol + NAD(+) + 4 H(+)(out). NDH-1 shuttles electrons from NADH, via FMN and iron-sulfur (Fe-S) centers, to quinones in the respiratory chain. The immediate electron acceptor for the enzyme in this species is believed to be ubiquinone. Couples the redox reaction to proton translocation (for every two electrons transferred, four hydrogen ions are translocated across the cytoplasmic membrane), and thus conserves the redox energy in a proton gradient. This chain is NADH-quinone oxidoreductase subunit C, found in Rhizobium etli (strain ATCC 51251 / DSM 11541 / JCM 21823 / NBRC 15573 / CFN 42).